Consider the following 1009-residue polypeptide: Regulator of telomere elongation helicase 1 homolog (1009 aa).

Residues 7–322 (AGIPVHFPFE…KEMLLELEKA (316 aa)) form the Helicase ATP-binding domain. 42 to 49 (SPTGTGKT) serves as a coordination point for ATP. Residues cysteine 146, cysteine 164, cysteine 173, and cysteine 209 each coordinate [4Fe-4S] cluster. The DEAH box signature appears at 252 to 255 (DEAH).

Belongs to the helicase family. RAD3/XPD subfamily.

It localises to the nucleus. The catalysed reaction is ATP + H2O = ADP + phosphate + H(+). Its function is as follows. A probable ATP-dependent DNA helicase implicated in DNA repair and the maintenance of genomic stability. Acts as an anti-recombinase to counteract toxic recombination and limit crossover during meiosis. Regulates meiotic recombination and crossover homeostasis by physically dissociating strand invasion events and thereby promotes noncrossover repair by meiotic synthesis dependent strand annealing (SDSA) as well as disassembly of D loop recombination intermediates. The polypeptide is Regulator of telomere elongation helicase 1 homolog (Drosophila persimilis (Fruit fly)).